A 777-amino-acid chain; its full sequence is Rho-GTPase-activating protein 8 (777 aa).

Positions 3-420 (SSFSNGFWSK…YQEIIQPESD (418 aa)) constitute an F-BAR domain. Residues 117 to 172 (QKLQTSQQVLTNQIKSYEKKYYTLKKTKSAYYNKCRNLEDYEEESKESNETTSEAI) adopt a coiled-coil conformation. Positions 213 to 296 (VLQEIPLQDY…WKDKAFQFAG (84 aa)) constitute a DEP domain. Residues 454–650 (VDVEFLSHRD…DLLTYGPSIF (197 aa)) enclose the Rho-GAP domain. Positions 667 to 709 (LYQSSATPRSTDVSPTRPDSISSVRSHTAVESPRSSFEELQPS) are disordered. The segment covering 668 to 692 (YQSSATPRSTDVSPTRPDSISSVRS) has biased composition (polar residues). S676 and S680 each carry phosphoserine. T682 is subject to Phosphothreonine. At S686 the chain carries Phosphoserine. Phosphothreonine is present on T694. A Phosphoserine modification is found at S698.

In terms of assembly, interacts with pak1/shk1. Phosphorylated by pak1/shk1.

The protein resides in the cytoplasm. Acts in signal transduction. Negatively regulates the pak1/shk1 control pathway. This Schizosaccharomyces pombe (strain 972 / ATCC 24843) (Fission yeast) protein is Rho-GTPase-activating protein 8 (rga8).